The sequence spans 214 residues: Transcription factor 23 (214 aa).

Disordered regions lie at residues 1 to 86 (MSQR…ARER) and 174 to 214 (DSTT…LGDK). A compositionally biased stretch (basic and acidic residues) spans 40-49 (TRQDPWEERS). In terms of domain architecture, bHLH spans 76 to 128 (EASPENAARERSRVRTLRQAFLALQAALPAVPPDTKLSKLDVLVLAASYIAHL). Over residues 174 to 183 (DSTTASTPSQ) the composition is skewed to polar residues.

In terms of assembly, forms inactive heterodimeric complexes with TCF3. Expressed in liver, kidney and spleen.

It is found in the nucleus. Functionally, inhibits E-box-mediated binding and transactivation of bHLH factors. Inhibitory effect is similar to that of ID proteins. Inhibits the formation of TCF3 and MYOD1 homodimers and heterodimers. Lacks DNA binding activity. Seems to play a role in the inhibition of myogenesis. The chain is Transcription factor 23 (TCF23) from Homo sapiens (Human).